The sequence spans 359 residues: Guanine nucleotide-binding protein subunit alpha-11 (359 aa).

S-palmitoyl cysteine attachment occurs at residues C9 and C10. The 322-residue stretch at 38–359 (RELKLLLLGT…QLNLKEYNLV (322 aa)) folds into the G-alpha domain. Residues 41 to 54 (KLLLLGTGESGKST) are G1 motif. GTP contacts are provided by residues 46-53 (GTGESGKS) and 180-183 (LRVR). S53 provides a ligand contact to Mg(2+). The interval 178-186 (DVLRVRVPT) is G2 motif. T186 provides a ligand contact to Mg(2+). The tract at residues 201–210 (FRMVDVGGQR) is G3 motif. Residues 270 to 277 (ILFLNKKD) form a G4 motif region. Residues 274 to 277 (NKKD) and A331 each bind GTP. The interval 329 to 334 (TCATDT) is G5 motif.

The protein belongs to the G-alpha family. G(q) subfamily. As to quaternary structure, g proteins are composed of 3 units; alpha, beta and gamma. The alpha chain contains the guanine nucleotide binding site. Interacts with RGS22. Interacts with NTSR1.

It is found in the cell membrane. The protein localises to the cytoplasm. It catalyses the reaction GTP + H2O = GDP + phosphate + H(+). In terms of biological role, guanine nucleotide-binding proteins (G proteins) function as transducers downstream of G protein-coupled receptors (GPCRs) in numerous signaling cascades. The alpha chain contains the guanine nucleotide binding site and alternates between an active, GTP-bound state and an inactive, GDP-bound state. Signaling by an activated GPCR promotes GDP release and GTP binding. The alpha subunit has a low GTPase activity that converts bound GTP to GDP, thereby terminating the signal. Both GDP release and GTP hydrolysis are modulated by numerous regulatory proteins. Signaling is mediated via phospholipase C-beta-dependent inositol lipid hydrolysis for signal propagation: activates phospholipase C-beta: following GPCR activation, GNA11 activates PLC-beta (PLCB1, PLCB2, PLCB3 or PLCB4), leading to production of diacylglycerol (DAG) and inositol 1,4,5-trisphosphate (IP3). Transduces FFAR4 signaling in response to long-chain fatty acids (LCFAs). Together with GNAQ, required for heart development. In the respiratory epithelium, transmits OXGR1-dependent signals that lead to downstream intracellular Ca(2+) release and mucocilliary clearance of airborne pathogens. This chain is Guanine nucleotide-binding protein subunit alpha-11 (Gna11), found in Rattus norvegicus (Rat).